The sequence spans 62 residues: Photosystem II reaction center protein Z (62 aa).

The next 2 helical transmembrane spans lie at 8-28 and 41-61; these read ALAA…VAYA and FLGS…NFLV.

Belongs to the PsbZ family. As to quaternary structure, PSII is composed of 1 copy each of membrane proteins PsbA, PsbB, PsbC, PsbD, PsbE, PsbF, PsbH, PsbI, PsbJ, PsbK, PsbL, PsbM, PsbT, PsbX, PsbY, PsbZ, Psb30/Ycf12, peripheral proteins PsbO, CyanoQ (PsbQ), PsbU, PsbV and a large number of cofactors. It forms dimeric complexes.

It localises to the cellular thylakoid membrane. May control the interaction of photosystem II (PSII) cores with the light-harvesting antenna, regulates electron flow through the 2 photosystem reaction centers. PSII is a light-driven water plastoquinone oxidoreductase, using light energy to abstract electrons from H(2)O, generating a proton gradient subsequently used for ATP formation. This Cyanothece sp. (strain PCC 7425 / ATCC 29141) protein is Photosystem II reaction center protein Z.